A 527-amino-acid chain; its full sequence is Baeyer-Villiger monooxygenase (527 aa).

FAD is bound by residues S36, E56, 64–67, D76, Y82, and I125; that span reads TWRV. 74–76 provides a ligand contact to NADP(+); it reads ACD. NADP(+) is bound by residues 199–205, 222–223, and 308–309; these read TGASAIQ, RT, and KR. M415 provides a ligand contact to FAD.

It belongs to the FAD-binding monooxygenase family. FAD serves as cofactor.

In terms of biological role, catalyzes a Baeyer-Villiger oxidation reaction, i.e. the insertion of an oxygen atom into a carbon-carbon bond adjacent to a carbonyl, which converts ketones to esters or lactones using NADPH and/or NADH as an electron donor. Thus, can convert bicyclo[3.2.0]hept-2-en-6-one into the oxidative lactone products 2-oxabicyclo[3.3.0]oct-6-en-3-one and 3-oxabicyclo[3.3.0]oct-6-en-2-one. Is also able to catalyze the sulfoxidation of methyl phenyl sulfide (thioanisole). This Pseudomonas aeruginosa (strain ATCC 15692 / DSM 22644 / CIP 104116 / JCM 14847 / LMG 12228 / 1C / PRS 101 / PAO1) protein is Baeyer-Villiger monooxygenase.